Reading from the N-terminus, the 521-residue chain is Cytochrome P450 1A1 (521 aa).

Phenylalanine 229 is a binding site for substrate. Cysteine 463 contacts heme.

Belongs to the cytochrome P450 family. Requires heme as cofactor.

Its subcellular location is the endoplasmic reticulum membrane. It localises to the microsome membrane. The enzyme catalyses an organic molecule + reduced [NADPH--hemoprotein reductase] + O2 = an alcohol + oxidized [NADPH--hemoprotein reductase] + H2O + H(+). In terms of biological role, cytochromes P450 are a group of heme-thiolate monooxygenases. They oxidize a variety of structurally unrelated compounds, including steroids, fatty acids, and xenobiotics. This chain is Cytochrome P450 1A1 (cyp1a1), found in Chelon saliens (Leaping mullet).